We begin with the raw amino-acid sequence, 90 residues long: Putative transcript Y 12 protein (90 aa).

The protein is Putative transcript Y 12 protein (TTTY12) of Homo sapiens (Human).